Here is a 537-residue protein sequence, read N- to C-terminus: Probable glucomannan 4-beta-mannosyltransferase 15 (537 aa).

A helical transmembrane segment spans residues 50–70 (FIVPLFKCIVVMCLIISLLVF). The active site involves D150. Substrate is bound by residues D209 and D211. The active site involves D303. The next 4 membrane-spanning stretches (helical) occupy residues 382–402 (IVVH…SVFL), 418–438 (VITL…IFWV), 494–514 (EMMM…FGNA), and 515–535 (FLYL…VGFV).

It belongs to the glycosyltransferase 2 family. Plant cellulose synthase-like A subfamily.

It is found in the golgi apparatus membrane. The catalysed reaction is GDP-mannose + (glucomannan)n = GDP + (glucomannan)n+1.. Its function is as follows. Probable mannan synthase which consists of a 4-beta-mannosyltransferase activity on mannan using GDP-mannose. The beta-1,4-mannan product is the backbone for galactomannan synthesis by galactomannan galactosyltransferase. Galactomannan is a noncellulosic polysaccharides of plant cell wall. The protein is Probable glucomannan 4-beta-mannosyltransferase 15 of Arabidopsis thaliana (Mouse-ear cress).